The sequence spans 352 residues: Holliday junction branch migration complex subunit RuvB (352 aa).

Positions 1-182 (MRIELLNTPP…FGINSRFDYY (182 aa)) are large ATPase domain (RuvB-L). ATP is bound by residues Ile21, Arg22, Gly63, Lys66, Thr67, Thr68, 129–131 (EDF), Arg172, Tyr182, and Arg219. Mg(2+) is bound at residue Thr67. A small ATPAse domain (RuvB-S) region spans residues 183 to 253 (EPELLTRIII…IAMKTLECLE (71 aa)). The head domain (RuvB-H) stretch occupies residues 256 to 352 (EEGLDEMDKK…LPLFDESEAD (97 aa)). Residues Arg292, Arg311, and Arg316 each contribute to the DNA site.

It belongs to the RuvB family. As to quaternary structure, homohexamer. Forms an RuvA(8)-RuvB(12)-Holliday junction (HJ) complex. HJ DNA is sandwiched between 2 RuvA tetramers; dsDNA enters through RuvA and exits via RuvB. An RuvB hexamer assembles on each DNA strand where it exits the tetramer. Each RuvB hexamer is contacted by two RuvA subunits (via domain III) on 2 adjacent RuvB subunits; this complex drives branch migration. In the full resolvosome a probable DNA-RuvA(4)-RuvB(12)-RuvC(2) complex forms which resolves the HJ.

It localises to the cytoplasm. It carries out the reaction ATP + H2O = ADP + phosphate + H(+). Functionally, the RuvA-RuvB-RuvC complex processes Holliday junction (HJ) DNA during genetic recombination and DNA repair, while the RuvA-RuvB complex plays an important role in the rescue of blocked DNA replication forks via replication fork reversal (RFR). RuvA specifically binds to HJ cruciform DNA, conferring on it an open structure. The RuvB hexamer acts as an ATP-dependent pump, pulling dsDNA into and through the RuvAB complex. RuvB forms 2 homohexamers on either side of HJ DNA bound by 1 or 2 RuvA tetramers; 4 subunits per hexamer contact DNA at a time. Coordinated motions by a converter formed by DNA-disengaged RuvB subunits stimulates ATP hydrolysis and nucleotide exchange. Immobilization of the converter enables RuvB to convert the ATP-contained energy into a lever motion, pulling 2 nucleotides of DNA out of the RuvA tetramer per ATP hydrolyzed, thus driving DNA branch migration. The RuvB motors rotate together with the DNA substrate, which together with the progressing nucleotide cycle form the mechanistic basis for DNA recombination by continuous HJ branch migration. Branch migration allows RuvC to scan DNA until it finds its consensus sequence, where it cleaves and resolves cruciform DNA. The sequence is that of Holliday junction branch migration complex subunit RuvB from Chlorobium chlorochromatii (strain CaD3).